A 184-amino-acid polypeptide reads, in one-letter code: Photosystem I assembly protein Ycf4 (184 aa).

2 consecutive transmembrane segments (helical) span residues 22–42 and 57–77; these read FFWA…GTSS and IPFF…LFIS.

Belongs to the Ycf4 family.

The protein resides in the plastid. It is found in the chloroplast thylakoid membrane. In terms of biological role, seems to be required for the assembly of the photosystem I complex. In Ceratophyllum demersum (Rigid hornwort), this protein is Photosystem I assembly protein Ycf4.